Reading from the N-terminus, the 364-residue chain is UDP-N-acetylglucosamine--N-acetylmuramyl-(pentapeptide) pyrophosphoryl-undecaprenol N-acetylglucosamine transferase 1 (364 aa).

UDP-N-acetyl-alpha-D-glucosamine-binding positions include 10 to 12, Asn-124, Ser-195, Ile-250, and Gln-295; that span reads TGG.

This sequence belongs to the glycosyltransferase 28 family. MurG subfamily.

It localises to the cell membrane. It carries out the reaction di-trans,octa-cis-undecaprenyl diphospho-N-acetyl-alpha-D-muramoyl-L-alanyl-D-glutamyl-meso-2,6-diaminopimeloyl-D-alanyl-D-alanine + UDP-N-acetyl-alpha-D-glucosamine = di-trans,octa-cis-undecaprenyl diphospho-[N-acetyl-alpha-D-glucosaminyl-(1-&gt;4)]-N-acetyl-alpha-D-muramoyl-L-alanyl-D-glutamyl-meso-2,6-diaminopimeloyl-D-alanyl-D-alanine + UDP + H(+). Its pathway is cell wall biogenesis; peptidoglycan biosynthesis. Functionally, cell wall formation. Catalyzes the transfer of a GlcNAc subunit on undecaprenyl-pyrophosphoryl-MurNAc-pentapeptide (lipid intermediate I) to form undecaprenyl-pyrophosphoryl-MurNAc-(pentapeptide)GlcNAc (lipid intermediate II). This chain is UDP-N-acetylglucosamine--N-acetylmuramyl-(pentapeptide) pyrophosphoryl-undecaprenol N-acetylglucosamine transferase 1, found in Bacillus cereus (strain ATCC 14579 / DSM 31 / CCUG 7414 / JCM 2152 / NBRC 15305 / NCIMB 9373 / NCTC 2599 / NRRL B-3711).